The chain runs to 143 residues: Large ribosomal subunit protein uL11 (143 aa).

Belongs to the universal ribosomal protein uL11 family. In terms of assembly, part of the ribosomal stalk of the 50S ribosomal subunit. Interacts with L10 and the large rRNA to form the base of the stalk. L10 forms an elongated spine to which L12 dimers bind in a sequential fashion forming a multimeric L10(L12)X complex. In terms of processing, one or more lysine residues are methylated.

Functionally, forms part of the ribosomal stalk which helps the ribosome interact with GTP-bound translation factors. This chain is Large ribosomal subunit protein uL11, found in Pseudomonas fluorescens (strain SBW25).